The following is a 451-amino-acid chain: UDP-N-acetylmuramate--L-alanine ligase (451 aa).

Residue 110 to 116 (GTHGKTT) participates in ATP binding.

It belongs to the MurCDEF family.

The protein resides in the cytoplasm. The catalysed reaction is UDP-N-acetyl-alpha-D-muramate + L-alanine + ATP = UDP-N-acetyl-alpha-D-muramoyl-L-alanine + ADP + phosphate + H(+). It functions in the pathway cell wall biogenesis; peptidoglycan biosynthesis. Cell wall formation. The protein is UDP-N-acetylmuramate--L-alanine ligase of Francisella tularensis subsp. holarctica (strain FTNF002-00 / FTA).